Reading from the N-terminus, the 280-residue chain is Nitrogenase iron protein (280 aa).

9 to 16 (GKGGIGKS) provides a ligand contact to ATP. Residue cysteine 97 coordinates [4Fe-4S] cluster. Arginine 100 carries the ADP-ribosylarginine; by dinitrogenase reductase ADP-ribosyltransferase modification. Position 132 (cysteine 132) interacts with [4Fe-4S] cluster.

This sequence belongs to the NifH/BchL/ChlL family. In terms of assembly, homodimer. [4Fe-4S] cluster serves as cofactor. In terms of processing, the reversible ADP-ribosylation of Arg-100 inactivates the nitrogenase reductase and regulates nitrogenase activity.

It catalyses the reaction N2 + 8 reduced [2Fe-2S]-[ferredoxin] + 16 ATP + 16 H2O = H2 + 8 oxidized [2Fe-2S]-[ferredoxin] + 2 NH4(+) + 16 ADP + 16 phosphate + 6 H(+). In terms of biological role, the key enzymatic reactions in nitrogen fixation are catalyzed by the nitrogenase complex, which has 2 components: the iron protein and the molybdenum-iron protein. The protein is Nitrogenase iron protein of Desulforudis audaxviator (strain MP104C).